Consider the following 441-residue polypeptide: tRNA (guanine(37)-N(1))-methyltransferase (441 aa).

The transit peptide at 1–9 (MFAPPAARA) directs the protein to the mitochondrion. S-adenosyl-L-methionine contacts are provided by residues arginine 221, 248–249 (DL), 276–277 (DG), and asparagine 331.

Belongs to the class I-like SAM-binding methyltransferase superfamily. TRM5/TYW2 family. As to quaternary structure, monomer.

The protein resides in the mitochondrion matrix. It is found in the nucleus. It localises to the cytoplasm. It catalyses the reaction guanosine(37) in tRNA + S-adenosyl-L-methionine = N(1)-methylguanosine(37) in tRNA + S-adenosyl-L-homocysteine + H(+). Specifically methylates the N1 position of guanosine-37 in various cytoplasmic and mitochondrial tRNAs. Methylation is not dependent on the nature of the nucleoside 5' of the target nucleoside. This is the first step in the biosynthesis of wybutosine (yW), a modified base adjacent to the anticodon of tRNAs and required for accurate decoding. In Phaeosphaeria nodorum (strain SN15 / ATCC MYA-4574 / FGSC 10173) (Glume blotch fungus), this protein is tRNA (guanine(37)-N(1))-methyltransferase.